The chain runs to 233 residues: MSKSTVFTVLLLLLGMAAYSFGWVQAVAEAAAQYVQIFNNDALRLGLLACIAAVLMLPAFLYLHYVTQSVKNMTAAFQKLTQSHQSCCDFQHHRLCSRYAEEVKSLRDRYKNVRQTYVMAAVLCQVIIFGCMFEIVKAVPFRLHTPPIVSTGMALLLILYLLFYMRMYLLKLFQHGTLFKKILACVLTGAGIGWMLSFTISELLFLIILAAIQQIGSFIYKRFSNRGFTSLDL.

Transmembrane regions (helical) follow at residues 4–24 (STVFTVLLLLLGMAAYSFGWV), 46–66 (GLLACIAAVLMLPAFLYLHYV), 116–136 (TYVMAAVLCQVIIFGCMFEIV), 145–165 (TPPIVSTGMALLLILYLLFYM), and 192–212 (IGWMLSFTISELLFLIILAAI).

Its subcellular location is the cell membrane. Its function is as follows. Involved in the production of the bacteriocin subtilosin. The polypeptide is Antilisterial bacteriocin subtilosin biosynthesis protein AlbG (albG) (Bacillus subtilis).